Here is a 250-residue protein sequence, read N- to C-terminus: GVQTSNASSPDFQLLVRASLQQLIPELASGVPSIGAEGVDPLRGLPPIVHNSNGFKVQLDDVSISGLSATLINDVNVDLTSNTIRIQATVPGYITATGIQTTDAEIMGIPLKGSGPFTISLANPSLAVTLTGAPSAGPNGQTYLRLTSASAAIEPGTPTADIKGFFPQFPPLEAAASAFASVVAPDVVQSLKPTLDKWLGGVALQRAQAVFSSVSYDALFPGRTPAAVGLYRAVPGLHTLPLPLSAFAYH.

As to expression, deposited in the epidermis and cuticle of male locusts during their sexual maturation.

In terms of biological role, has beta-carotene-binding activity. May be involved in the transport of carotenes from internal tissues to epidermis and cuticle of the locust. The chain is Putative beta-carotene-binding protein from Schistocerca gregaria (Desert locust).